The following is a 207-amino-acid chain: Small ribosomal subunit protein uS4 (207 aa).

Residues 31–54 are disordered; that stretch reads KCKLDTKPGQHGRTSGSRTSDYGN. Residues 42–53 are compositionally biased toward polar residues; it reads GRTSGSRTSDYG. The 62-residue stretch at 97–158 folds into the S4 RNA-binding domain; the sequence is SRLDNVVYRM…KAKKQARITE (62 aa).

This sequence belongs to the universal ribosomal protein uS4 family. Part of the 30S ribosomal subunit. Contacts protein S5. The interaction surface between S4 and S5 is involved in control of translational fidelity.

One of the primary rRNA binding proteins, it binds directly to 16S rRNA where it nucleates assembly of the body of the 30S subunit. Its function is as follows. With S5 and S12 plays an important role in translational accuracy. The polypeptide is Small ribosomal subunit protein uS4 (Polynucleobacter asymbioticus (strain DSM 18221 / CIP 109841 / QLW-P1DMWA-1) (Polynucleobacter necessarius subsp. asymbioticus)).